A 421-amino-acid polypeptide reads, in one-letter code: Protein HOMOLOG OF MAMMALIAN LYST-INTERACTING PROTEIN 5 (421 aa).

Residue serine 2 is modified to N-acetylserine. A disordered region spans residues isoleucine 146–proline 374. The span at serine 165–threonine 185 shows a compositional bias: polar residues. Positions histidine 188–phenylalanine 207 are enriched in basic and acidic residues. The span at leucine 245–histidine 258 shows a compositional bias: pro residues. Residues asparagine 278–glutamine 293 are compositionally biased toward polar residues. Composition is skewed to low complexity over residues serine 294 to proline 308 and proline 317 to serine 337.

The protein belongs to the VTA1 family. Homodimer. Interacts with SKD1/VPS4, VPS60-1, CHMP1A and CHMP1B. Binds to PROS/At4g24370. Interacts with MPK6 and MPK3. Post-translationally, phosphorylated by activated MPK6 and MPK3, this activation is required to trigger multivesicular bodies (MVBs) trafficking upon plant infection.

It is found in the cytoplasm. The protein localises to the endosome membrane. It localises to the nucleus. Its subcellular location is the endosome. The protein resides in the multivesicular body. Functionally, involved in the endosomal multivesicular bodies (MVB) pathway. MVBs contain intraluminal vesicles (ILVs) that are generated by invagination and scission from the limiting membrane of the endosome and are delivered to lysosomes enabling degradation of membrane proteins. Thought to be a cofactor of SKD1/VPS4, which catalyzes the disassembly of membrane-associated ESCRT-III. Target of pathogen-responsive mitogen-activated protein kinases (MPKs) that plays a critical role in plant basal resistance to Pseudomonas syringae in a SKD1-dependent manner by promoting multivesicular bodies (MVBs) trafficking upon plant infection. In Arabidopsis thaliana (Mouse-ear cress), this protein is Protein HOMOLOG OF MAMMALIAN LYST-INTERACTING PROTEIN 5.